Here is a 2512-residue protein sequence, read N- to C-terminus: Probable polyketide synthase 5 (2512 aa).

The Ketosynthase family 3 (KS3) domain maps to 17 to 447; that stretch reads MKGVAIVGIG…GSNCCLLISE (431 aa). Catalysis depends on for beta-ketoacyl synthase activity residues Cys-187, His-329, and His-368. An acyl/malonyl transferase region spans residues 638 to 671; it reads GVNPSFILGHSLGEIPTSYCSGMIDLDTFCYTVY. Ser-648 functions as the For acyl/malonyl transferase activity in the catalytic mechanism. Residues 928-1050 are N-terminal hotdog fold; that stretch reads IDHLGLSNSY…ANFQLLDHTI (123 aa). In terms of domain architecture, PKS/mFAS DH spans 928-1210; that stretch reads IDHLGLSNSY…SKSLIPIKEL (283 aa). His-962 acts as the Proton acceptor; for dehydratase activity in catalysis. Residues 1067-1210 form a C-terminal hotdog fold region; that stretch reads TLARLTKNEI…SKSLIPIKEL (144 aa). The Proton donor; for dehydratase activity role is filled by Asp-1125. Residues 2430 to 2507 enclose the Carrier domain; that stretch reads AGSKNVDELF…VSIKIILNFL (78 aa). O-(pantetheine 4'-phosphoryl)serine is present on Ser-2467.

Pantetheine 4'-phosphate is required as a cofactor.

Probable polyketide synthase. The sequence is that of Probable polyketide synthase 5 (pks5) from Dictyostelium discoideum (Social amoeba).